The sequence spans 536 residues: Methyl-accepting chemotaxis aspartate transducer (536 aa).

The Cytoplasmic portion of the chain corresponds to 1-10 (MFNRIRISTS). Residues 11–31 (LFLLLISFCIMQLISTGLSYV) form a helical membrane-spanning segment. The Periplasmic portion of the chain corresponds to 32–188 (ALRADNHNLE…ASSQQAYGWS (157 aa)). The tract at residues 64-73 (RNTLNRAGTR) is the 3 Arg may form a positively charged pocket, which binds the alpha-carboxyl group of the attractant AA. A helical membrane pass occupies residues 189-209 (IWLVAGAVLMLLVVTLSAMWW). The Cytoplasmic portion of the chain corresponds to 210-536 (LRTMLVQPLN…VKETLDCQTA (327 aa)). Residues 212–264 (TMLVQPLNIIRGHFERIASGDLSAPIEVYGRNEISQLFASLQRMQQSLIGTVG) form the HAMP domain. Residues 269 to 498 (GAESILIGLQ…ESASAAAALE (230 aa)) form the Methyl-accepting transducer domain. Glutamine 293 bears the Glutamate methyl ester (Gln) mark. Residue glutamate 300 is modified to Glutamate methyl ester (Glu). Glutamate methyl ester (Gln) is present on glutamine 307. Glutamate 489 and glutamate 498 each carry glutamate methyl ester (Glu).

This sequence belongs to the methyl-accepting chemotaxis (MCP) protein family.

It localises to the cell inner membrane. Its function is as follows. This protein responds to changes in Asp concentration in the environment, transduces a signal from the outside to the inside of the cell, and facilitates sensory adaptation through various levels of methylation. In terms of biological role, chemotactic-signal transducers respond to changes in the concentration of attractants and repellents in the environment, transduce a signal from the outside to the inside of the cell, and facilitate sensory adaptation through the variation of the level of methylation. Attractants increase the level of methylation while repellents decrease the level of methylation, the methyl groups are added by the methyltransferase CheR and removed by the methylesterase CheB. The sequence is that of Methyl-accepting chemotaxis aspartate transducer (tas) from Klebsiella aerogenes (strain ATCC 13048 / DSM 30053 / CCUG 1429 / JCM 1235 / KCTC 2190 / NBRC 13534 / NCIMB 10102 / NCTC 10006 / CDC 819-56) (Enterobacter aerogenes).